We begin with the raw amino-acid sequence, 470 residues long: Xaa-Pro aminopeptidase 2 (470 aa).

Positions 287, 299, 382, 413, and 437 each coordinate Mn(2+).

The protein belongs to the peptidase M24B family. Homodimer. The cofactor is Mn(2+).

It catalyses the reaction Release of any N-terminal amino acid, including proline, that is linked to proline, even from a dipeptide or tripeptide.. The sequence is that of Xaa-Pro aminopeptidase 2 (pepP2) from Streptomyces coelicolor (strain ATCC BAA-471 / A3(2) / M145).